A 209-amino-acid polypeptide reads, in one-letter code: Large ribosomal subunit protein uL3 (209 aa).

The tract at residues 126 to 148 (HGQSRGPMAHGSRYHRRPGSMGP) is disordered.

It belongs to the universal ribosomal protein uL3 family. Part of the 50S ribosomal subunit. Forms a cluster with proteins L14 and L19.

One of the primary rRNA binding proteins, it binds directly near the 3'-end of the 23S rRNA, where it nucleates assembly of the 50S subunit. This chain is Large ribosomal subunit protein uL3, found in Listeria innocua serovar 6a (strain ATCC BAA-680 / CLIP 11262).